Consider the following 59-residue polypeptide: Insulin (59 aa).

Cystine bridges form between Cys-7–Cys-45, Cys-19–Cys-58, and Cys-44–Cys-49.

It belongs to the insulin family. As to quaternary structure, heterodimer of a B chain and an A chain linked by two disulfide bonds.

Its subcellular location is the secreted. Insulin decreases blood glucose concentration. It increases cell permeability to monosaccharides, amino acids and fatty acids. It accelerates glycolysis, the pentose phosphate cycle, and glycogen synthesis in liver. This chain is Insulin (ins), found in Chimaera monstrosa (Rabbit fish).